The primary structure comprises 62 residues: Potassium channel toxin alpha-KTx 18.3 (62 aa).

A signal peptide spans 1 to 26 (MHFSGVAFILISMVLIGSIFETTVEA). Disulfide bonds link C34–C53, C39–C58, and C43–C60.

This sequence belongs to the short scorpion toxin superfamily. Potassium channel inhibitor family. Alpha-KTx 18 subfamily. Expressed by the venom gland.

The protein localises to the secreted. Functionally, probable voltage-gated potassium channel inhibitor. This Tityus discrepans (Venezuelan scorpion) protein is Potassium channel toxin alpha-KTx 18.3.